The following is a 476-amino-acid chain: FAD-dependent monooxygenase dpasE (476 aa).

The first 21 residues, 1–21 (MSQPAFKIIIVGCSVTGLTLA), serve as a signal peptide directing secretion. FAD-binding residues include Glu35, Ala49, and Arg109. 2 N-linked (GlcNAc...) asparagine glycosylation sites follow: Asn190 and Asn219. Positions 308 and 321 each coordinate FAD. The chain crosses the membrane as a helical span at residues 441–461 (GAGFWITAFLSLSLLAVAATM).

Belongs to the paxM FAD-dependent monooxygenase family. FAD serves as cofactor.

It is found in the membrane. It functions in the pathway secondary metabolite biosynthesis; terpenoid biosynthesis. In terms of biological role, FAD-dependent monooxygenase; part of the gene cluster that mediates the biosynthesis of the diterpenoid pyrones subglutinols A and B. The first step of the pathway is the synthesis of the alpha-pyrone moiety by the polyketide synthase dpasA via condensation of one acetyl-CoA starter unit with 3 malonyl-CoA units and 2 methylations. The alpha-pyrone is then combined with geranylgeranyl pyrophosphate (GGPP) formed by the GGPP synthase dpasD through the action of the prenyltransferase dpasC to yield a linear alpha-pyrone diterpenoid. Subsequent steps in the diterpenoid pyrone biosynthetic pathway involve the decalin core formation, which is initiated by the epoxidation of the C10-C11 olefin by the FAD-dependent oxidoreductase dpasE, and is followed by a cyclization cascade catalyzed by the terpene cyclase dpasB. The FAD-linked oxidoreductase dpasF is then involved in tetrahydrofuran (THF) ring formation at the C5 unit to complete the formation of subglutinols A and B. DpasF possesses also an additional catalytic ability of multi-step oxidations to generate a new DDP analog with an enone system at the C5 named FDDP A. The protein is FAD-dependent monooxygenase dpasE of Apiospora sacchari (Arthrinium sacchari).